A 73-amino-acid chain; its full sequence is RNA-binding protein Hfq (73 aa).

The region spanning 8–68 (DQFLNQIRKD…ISTFAPQKNV (61 aa)) is the Sm domain.

It belongs to the Hfq family. As to quaternary structure, homohexamer.

RNA chaperone that binds small regulatory RNA (sRNAs) and mRNAs to facilitate mRNA translational regulation in response to envelope stress, environmental stress and changes in metabolite concentrations. Also binds with high specificity to tRNAs. The chain is RNA-binding protein Hfq from Bacillus velezensis (strain DSM 23117 / BGSC 10A6 / LMG 26770 / FZB42) (Bacillus amyloliquefaciens subsp. plantarum).